The primary structure comprises 214 residues: Adenylate kinase (214 aa).

10 to 15 contacts ATP; it reads GAGKGT. Residues 30–59 are NMP; sequence STGDMFRDHKARGTEIGKQVQAIMDAGGLV. AMP is bound by residues Thr31, Arg36, 57–59, 85–88, and Gln92; these read GLV and GYPR. The segment at 126 to 163 is LID; that stretch reads GRRSCPRCGAVYHVSQNPPHRAGFCDRDDAALVQREDD. Arg127 contributes to the ATP binding site. Zn(2+) contacts are provided by Cys130 and Cys133. 136–137 lines the ATP pocket; it reads VY. Zn(2+)-binding residues include Cys150 and Asp153. Arg160 and Arg171 together coordinate AMP. Residue Gly199 participates in ATP binding.

It belongs to the adenylate kinase family. In terms of assembly, monomer.

It is found in the cytoplasm. The enzyme catalyses AMP + ATP = 2 ADP. Its pathway is purine metabolism; AMP biosynthesis via salvage pathway; AMP from ADP: step 1/1. Catalyzes the reversible transfer of the terminal phosphate group between ATP and AMP. Plays an important role in cellular energy homeostasis and in adenine nucleotide metabolism. In Anaeromyxobacter dehalogenans (strain 2CP-1 / ATCC BAA-258), this protein is Adenylate kinase.